The primary structure comprises 293 residues: Nucleotide-binding protein CKR_3143 (293 aa).

8-15 lines the ATP pocket; the sequence is GLSGAGKT. Position 59-62 (59-62) interacts with GTP; sequence DIRG.

Belongs to the RapZ-like family.

Displays ATPase and GTPase activities. The chain is Nucleotide-binding protein CKR_3143 from Clostridium kluyveri (strain NBRC 12016).